Reading from the N-terminus, the 809-residue chain is Glutamine--tRNA ligase (809 aa).

Basic and acidic residues predominate over residues 185-198 (DLIKKKTKNNEKKK). Residues 185–216 (DLIKKKTKNNEKKKTNSAKKSSDNSASSGPKR) are disordered. Positions 258–268 (PEPNGYLHIGH) match the 'HIGH' region motif. ATP contacts are provided by residues 259 to 261 (EPN) and 265 to 271 (HIGHSKA). Asp-291 is a binding site for L-glutamine. At Ser-378 the chain carries Phosphoserine. Tyr-440 contacts L-glutamine. ATP contacts are provided by residues Thr-459, 488–489 (RL), and 496–498 (LSK). The short motif at 495–499 (VLSKR) is the 'KMSKS' region element.

The protein belongs to the class-I aminoacyl-tRNA synthetase family.

The catalysed reaction is tRNA(Gln) + L-glutamine + ATP = L-glutaminyl-tRNA(Gln) + AMP + diphosphate. In Saccharomyces cerevisiae (strain ATCC 204508 / S288c) (Baker's yeast), this protein is Glutamine--tRNA ligase (GLN4).